The sequence spans 698 residues: Nitric oxide-associated protein 1 (698 aa).

Residues 42 to 66 (FQHSSSLGRELPYDPVDTEGFGEGG) form a disordered region. Y77 is subject to Phosphotyrosine. 2 disordered regions span residues 80–134 (DPEP…DPAL) and 279–306 (LAPG…PNWS). Basic and acidic residues predominate over residues 102–126 (ERQRQQRREERRQQNLRARSREHPV). Residues 202 to 503 (LELVSAALRR…FYDTPGITKE (302 aa)) form the CP-type G domain.

It belongs to the TRAFAC class YlqF/YawG GTPase family. NOA1 subfamily. Homodimer or multimer. Interacts with mitochondrial complex I, DAP3, MRPL12 and MRPS27.

Its subcellular location is the mitochondrion inner membrane. Functionally, involved in regulation of mitochondrial protein translation and respiration. Plays a role in mitochondria-mediated cell death. May act as a scaffolding protein or stabilizer of respiratory chain supercomplexes. Binds GTP. In Homo sapiens (Human), this protein is Nitric oxide-associated protein 1 (NOA1).